We begin with the raw amino-acid sequence, 224 residues long: Flagellar L-ring protein (224 aa).

The first 15 residues, 1–15 (MKWYLVALSGLLLSG), serve as a signal peptide directing secretion. Residue Cys16 is the site of N-palmitoyl cysteine attachment. Residue Cys16 is the site of S-diacylglycerol cysteine attachment.

Belongs to the FlgH family. As to quaternary structure, the basal body constitutes a major portion of the flagellar organelle and consists of four rings (L,P,S, and M) mounted on a central rod.

It localises to the cell outer membrane. Its subcellular location is the bacterial flagellum basal body. Functionally, assembles around the rod to form the L-ring and probably protects the motor/basal body from shearing forces during rotation. The chain is Flagellar L-ring protein from Trichlorobacter lovleyi (strain ATCC BAA-1151 / DSM 17278 / SZ) (Geobacter lovleyi).